Here is a 237-residue protein sequence, read N- to C-terminus: Uridylate kinase (237 aa).

Position 11–14 (11–14 (KLSG)) interacts with ATP. Residues 18-23 (GGGGIG) form an involved in allosteric activation by GTP region. UMP is bound at residue G52. G53 and R57 together coordinate ATP. Residues D72 and 133–140 (SGMPYFST) contribute to the UMP site. Positions 161, 167, and 170 each coordinate ATP.

It belongs to the UMP kinase family. In terms of assembly, homohexamer.

The protein localises to the cytoplasm. It catalyses the reaction UMP + ATP = UDP + ADP. The protein operates within pyrimidine metabolism; CTP biosynthesis via de novo pathway; UDP from UMP (UMPK route): step 1/1. Allosterically activated by GTP. Inhibited by UTP. In terms of biological role, catalyzes the reversible phosphorylation of UMP to UDP. The sequence is that of Uridylate kinase from Cutibacterium acnes (strain DSM 16379 / KPA171202) (Propionibacterium acnes).